Reading from the N-terminus, the 135-residue chain is Universal stress protein Aq_178 (135 aa).

This sequence belongs to the universal stress protein A family.

The chain is Universal stress protein Aq_178 from Aquifex aeolicus (strain VF5).